A 306-amino-acid polypeptide reads, in one-letter code: Probable 2-dehydro-3-deoxygalactonokinase DgoK1 (306 aa).

It belongs to the DgoK family.

The enzyme catalyses 2-dehydro-3-deoxy-D-galactonate + ATP = 2-dehydro-3-deoxy-6-phospho-D-galactonate + ADP + H(+). It functions in the pathway carbohydrate acid metabolism; D-galactonate degradation; D-glyceraldehyde 3-phosphate and pyruvate from D-galactonate: step 2/3. Functionally, involved in the degradation of galactose via the DeLey-Doudoroff pathway. The protein is Probable 2-dehydro-3-deoxygalactonokinase DgoK1 (dgoK1) of Rhizobium meliloti (strain 1021) (Ensifer meliloti).